We begin with the raw amino-acid sequence, 226 residues long: Phosphoglycolate phosphatase (226 aa).

Aspartate 8 serves as the catalytic Nucleophile. Residues aspartate 8 and aspartate 10 each contribute to the Mg(2+) site. Lysine 152 contacts substrate. Positions 175 and 179 each coordinate Mg(2+).

Belongs to the archaeal SPP-like hydrolase family. Requires Mg(2+) as cofactor.

It carries out the reaction 2-phosphoglycolate + H2O = glycolate + phosphate. Functionally, catalyzes the dephosphorylation of 2-phosphoglycolate. The sequence is that of Phosphoglycolate phosphatase from Natronomonas pharaonis (strain ATCC 35678 / DSM 2160 / CIP 103997 / JCM 8858 / NBRC 14720 / NCIMB 2260 / Gabara) (Halobacterium pharaonis).